Here is a 174-residue protein sequence, read N- to C-terminus: Centrosomal protein 20 (174 aa).

The necessary and sufficient for homooligomerization and localization to centrosomes and pericentriolar satellites stretch occupies residues 1-104 (MATVTELKAV…AFEESKDNSI (104 aa)). One can recognise a LisH domain in the interval 49–81 (ENLLINELIREYLEFNKYKYTASVLIAESGQPV). A disordered region spans residues 136-174 (TKHLSWKPSRRPDDDHVRKDTGPRTTTEELPAAAQAVSR). Serine 144 bears the Phosphoserine mark. The span at 145–157 (RRPDDDHVRKDTG) shows a compositional bias: basic and acidic residues.

It belongs to the CEP43 family. Homooligomer; probably required for localization to centrosomes. Forms a complex with KIAA0753/OFIP and OFD1; within this complex may stabilize the interaction between OFD1 and KIAA0753/OFIP. Interacts with PCM1; this interaction may be mediated by KIAA0753/OFIP.

It localises to the cytoplasm. Its subcellular location is the cytoskeleton. The protein localises to the microtubule organizing center. The protein resides in the centrosome. It is found in the centriole. It localises to the cell projection. Its subcellular location is the cilium. The protein localises to the cilium basal body. The protein resides in the cytoplasmic granule. It is found in the centriolar satellite. Its function is as follows. Involved in the biogenesis of cilia. Required for the recruitment of PLK1 to centrosomes and S phase progression. The protein is Centrosomal protein 20 of Mus musculus (Mouse).